A 204-amino-acid chain; its full sequence is Ras-related and estrogen-regulated growth inhibitor-like protein (204 aa).

Positions 1–204 are small GTPase-like; the sequence is MNDVKLTVLG…NVFGKRRKSV (204 aa). GTP-binding positions include 10-17, 57-63, and 122-125; these read GGEGTGKS, DPCSQPQ, and NKQD.

It belongs to the small GTPase superfamily. Ras family.

The catalysed reaction is GTP + H2O = GDP + phosphate + H(+). Functionally, binds GDP/GTP and may possess intrinsic GTPase activity. This chain is Ras-related and estrogen-regulated growth inhibitor-like protein (RERGL), found in Bos taurus (Bovine).